Reading from the N-terminus, the 199-residue chain is Large ribosomal subunit protein bL25 (199 aa).

The tract at residues 1–21 (MNIEKTLSVQKREGYGKGPSG) is disordered.

This sequence belongs to the bacterial ribosomal protein bL25 family. CTC subfamily. Part of the 50S ribosomal subunit; part of the 5S rRNA/L5/L18/L25 subcomplex. Contacts the 5S rRNA. Binds to the 5S rRNA independently of L5 and L18.

Its function is as follows. This is one of the proteins that binds to the 5S RNA in the ribosome where it forms part of the central protuberance. The sequence is that of Large ribosomal subunit protein bL25 from Desulfovibrio desulfuricans (strain ATCC 27774 / DSM 6949 / MB).